A 923-amino-acid chain; its full sequence is Alanine--tRNA ligase (923 aa).

Residues histidine 614, histidine 618, cysteine 717, and histidine 721 each coordinate Zn(2+). Residues 884–903 form a disordered region; that stretch reads KVGGGGGGPPDFAQGGGPDA. A compositionally biased stretch (gly residues) spans 885–901; sequence VGGGGGGPPDFAQGGGP.

This sequence belongs to the class-II aminoacyl-tRNA synthetase family. Zn(2+) serves as cofactor.

Its subcellular location is the cytoplasm. It carries out the reaction tRNA(Ala) + L-alanine + ATP = L-alanyl-tRNA(Ala) + AMP + diphosphate. Catalyzes the attachment of alanine to tRNA(Ala) in a two-step reaction: alanine is first activated by ATP to form Ala-AMP and then transferred to the acceptor end of tRNA(Ala). Also edits incorrectly charged Ser-tRNA(Ala) and Gly-tRNA(Ala) via its editing domain. This Haloquadratum walsbyi (strain DSM 16790 / HBSQ001) protein is Alanine--tRNA ligase.